A 567-amino-acid polypeptide reads, in one-letter code: DNA ligase B (567 aa).

K132 acts as the N6-AMP-lysine intermediate in catalysis.

The protein belongs to the NAD-dependent DNA ligase family. LigB subfamily.

It catalyses the reaction NAD(+) + (deoxyribonucleotide)n-3'-hydroxyl + 5'-phospho-(deoxyribonucleotide)m = (deoxyribonucleotide)n+m + AMP + beta-nicotinamide D-nucleotide.. Its function is as follows. Catalyzes the formation of phosphodiester linkages between 5'-phosphoryl and 3'-hydroxyl groups in double-stranded DNA using NAD as a coenzyme and as the energy source for the reaction. The sequence is that of DNA ligase B from Yersinia pseudotuberculosis serotype O:1b (strain IP 31758).